The primary structure comprises 131 residues: Small ribosomal subunit protein uS19 (131 aa).

This sequence belongs to the universal ribosomal protein uS19 family.

Protein S19 forms a complex with S13 that binds strongly to the 16S ribosomal RNA. In Nitrosopumilus maritimus (strain SCM1), this protein is Small ribosomal subunit protein uS19.